A 372-amino-acid polypeptide reads, in one-letter code: SAM domain-containing protein SAMSN-1 (372 aa).

The interval 1 to 71 (MLKRKPSNAS…SGGSLGKKVR (71 aa)) is disordered. Residues 20–25 (RSSSFG) carry the Important for interaction with 14-3-3 proteins motif. S23 and S34 each carry phosphoserine. Positions 37–49 (KSDDSIEVHDREL) are enriched in basic and acidic residues. The span at 52–63 (GSEEQSKTSSSG) shows a compositional bias: low complexity. Phosphoserine is present on S74. T76 is modified (phosphothreonine). 3 positions are modified to phosphoserine: S90, S97, and S119. A disordered region spans residues 90–111 (SEEKEEESGEEALPYRNSDPMI). Over residues 129-146 (LYSGQSSSSGITSCSDGT) the composition is skewed to low complexity. The disordered stretch occupies residues 129–153 (LYSGQSSSSGITSCSDGTSNRDSFR). Y160 bears the Phosphotyrosine mark. The SH3 domain maps to 163 to 224 (PFCGRAKVHT…KFIYVDVILE (62 aa)). Residues 241-305 (ENHQTIQEFL…LSAAESLLDE (65 aa)) form the SAM domain. The tract at residues 304-372 (DEETTVEHEK…QKIAITESSD (69 aa)) is disordered. Residues 317 to 329 (PLSSNPDILSASQ) show a composition bias toward polar residues.

In terms of assembly, interacts with FASLG. Interacts with phosphotyrosine containing proteins. Interacts (via SH3 domain) with CTTN. Interacts (phosphorylated at Ser-23) with YWHAB, YWHAE, YWHAG, YWHAH, YWHAZ and SFN. Interacts directly with SAP30 and HDAC1. Identified in a complex with SAP30 and HDAC1. As to expression, detected in spleen and lymph node (at protein level).

Its subcellular location is the nucleus. It localises to the cytoplasm. The protein resides in the cell projection. It is found in the ruffle. Negative regulator of B-cell activation. Down-regulates cell proliferation (in vitro). Promotes RAC1-dependent membrane ruffle formation and reorganization of the actin cytoskeleton. Regulates cell spreading and cell polarization. Stimulates HDAC1 activity. Regulates LYN activity by modulating its tyrosine phosphorylation. This is SAM domain-containing protein SAMSN-1 (Samsn1) from Mus musculus (Mouse).